A 231-amino-acid chain; its full sequence is MLGKFIVFEGGEGAGKTTQLNLVFEWLTGSGWTNRIKGYIQGDYPSVLTTREPGGTALGKSIRKLLLDVTATGNESIDERAELLLFAADRAQHVSSCLLPHLQQGALVLCDRYTDSTIAYQGYGRELDLTLIHQLNQIATQGLVSDLTFWLDIDPEFGLARTHDREQDPEIETDRMEANEIAFHQRLRQGFADLARQHPERIFRIEAHQSDDVVAQQIQGILESRLQEWYP.

Residue 10 to 17 (GGEGAGKT) participates in ATP binding.

It belongs to the thymidylate kinase family.

It catalyses the reaction dTMP + ATP = dTDP + ADP. In terms of biological role, phosphorylation of dTMP to form dTDP in both de novo and salvage pathways of dTTP synthesis. The polypeptide is Thymidylate kinase (Acaryochloris marina (strain MBIC 11017)).